A 431-amino-acid chain; its full sequence is Enolase (431 aa).

(2R)-2-phosphoglycerate is bound at residue Q167. E209 serves as the catalytic Proton donor. Mg(2+)-binding residues include D246, E290, and D317. (2R)-2-phosphoglycerate-binding residues include K342, R371, S372, and K393. K342 (proton acceptor) is an active-site residue.

Belongs to the enolase family. As to quaternary structure, component of the RNA degradosome, a multiprotein complex involved in RNA processing and mRNA degradation. It depends on Mg(2+) as a cofactor.

It localises to the cytoplasm. The protein resides in the secreted. It is found in the cell surface. The enzyme catalyses (2R)-2-phosphoglycerate = phosphoenolpyruvate + H2O. It participates in carbohydrate degradation; glycolysis; pyruvate from D-glyceraldehyde 3-phosphate: step 4/5. In terms of biological role, catalyzes the reversible conversion of 2-phosphoglycerate (2-PG) into phosphoenolpyruvate (PEP). It is essential for the degradation of carbohydrates via glycolysis. The chain is Enolase from Yersinia pestis bv. Antiqua (strain Antiqua).